A 78-amino-acid chain; its full sequence is Omega-conotoxin-like VnMKLT1-0111 (78 aa).

A signal peptide spans 1 to 22 (MKLTCMMIVAVLFLTAWTFVTA). A propeptide spanning residues 23–48 (DSRNGLEYLFPKAHYEMNPEASKLNK) is cleaved from the precursor. 3 cysteine pairs are disulfide-bonded: C52–C69, C59–C73, and C68–C77.

It belongs to the conotoxin O1 superfamily. As to expression, expressed by the venom duct.

The protein localises to the secreted. Its function is as follows. Omega-conotoxins act at presynaptic membranes, they bind and block voltage-gated calcium channels (Cav). In Conus ventricosus (Mediterranean cone), this protein is Omega-conotoxin-like VnMKLT1-0111.